A 270-amino-acid chain; its full sequence is MPELPEVEVTRLGIAPHLRGRRLEGAVVRDSRLRLPVNDDLAARVSGQRLLNLRRRGKYLLLDLERGTILIHLGMSGHLRVLPQSAPVQKHDHVDLLFADDLCLRFHDPRRFGAVLWLDDADHHPLLQHLGPEPLGDVFGAEYLYQRGRNRQIPVKSFLMDAHIVVGVGNIYANESLFAAGIDPRRPAGRIALPRYMKLVQAVRTVLEAAIAQGGTTLRDFTRPDGGNGYFRLSLAVYGREGEPCTHCGAPLQGVRIGGRATIYCSQCQR.

Proline 2 functions as the Schiff-base intermediate with DNA in the catalytic mechanism. Glutamate 3 serves as the catalytic Proton donor. Lysine 58 acts as the Proton donor; for beta-elimination activity in catalysis. Residues histidine 91, arginine 110, and arginine 151 each coordinate DNA. An FPG-type zinc finger spans residues 236–270 (AVYGREGEPCTHCGAPLQGVRIGGRATIYCSQCQR). The Proton donor; for delta-elimination activity role is filled by arginine 260.

Belongs to the FPG family. As to quaternary structure, monomer. Requires Zn(2+) as cofactor.

It catalyses the reaction Hydrolysis of DNA containing ring-opened 7-methylguanine residues, releasing 2,6-diamino-4-hydroxy-5-(N-methyl)formamidopyrimidine.. It carries out the reaction 2'-deoxyribonucleotide-(2'-deoxyribose 5'-phosphate)-2'-deoxyribonucleotide-DNA = a 3'-end 2'-deoxyribonucleotide-(2,3-dehydro-2,3-deoxyribose 5'-phosphate)-DNA + a 5'-end 5'-phospho-2'-deoxyribonucleoside-DNA + H(+). Involved in base excision repair of DNA damaged by oxidation or by mutagenic agents. Acts as a DNA glycosylase that recognizes and removes damaged bases. Has a preference for oxidized purines, such as 7,8-dihydro-8-oxoguanine (8-oxoG). Has AP (apurinic/apyrimidinic) lyase activity and introduces nicks in the DNA strand. Cleaves the DNA backbone by beta-delta elimination to generate a single-strand break at the site of the removed base with both 3'- and 5'-phosphates. This chain is Formamidopyrimidine-DNA glycosylase, found in Acidithiobacillus ferrooxidans (strain ATCC 23270 / DSM 14882 / CIP 104768 / NCIMB 8455) (Ferrobacillus ferrooxidans (strain ATCC 23270)).